Consider the following 183-residue polypeptide: Ras-related protein Rap-2c (183 aa).

10-17 is a binding site for GTP; sequence GSGGVGKS. The Effector region signature appears at 32-40; that stretch reads YDPTIEDFY. Residues 57-61 and 116-119 each bind GTP; these read DTAGT and NKVD. 2 S-palmitoyl cysteine lipidation sites follow: C176 and C177. C180 is modified (cysteine methyl ester). C180 is lipidated: S-geranylgeranyl cysteine. A propeptide spans 181–183 (removed in mature form); the sequence is VVQ.

The protein belongs to the small GTPase superfamily. Ras family. In terms of processing, palmitoylated. Palmitoylation is required for association with recycling endosome membranes and activation of TNIK.

It is found in the cytoplasm. The protein resides in the recycling endosome membrane. The catalysed reaction is GTP + H2O = GDP + phosphate + H(+). Functionally, small GTP-binding protein which cycles between a GDP-bound inactive and a GTP-bound active form. May play a role in cytoskeletal rearrangements and regulate cell spreading through activation of the effector TNIK. May play a role in SRE-mediated gene transcription. The polypeptide is Ras-related protein Rap-2c (RAP2C) (Bos taurus (Bovine)).